Reading from the N-terminus, the 78-residue chain is Small ribosomal subunit protein uS17 (78 aa).

Belongs to the universal ribosomal protein uS17 family. In terms of assembly, part of the 30S ribosomal subunit.

In terms of biological role, one of the primary rRNA binding proteins, it binds specifically to the 5'-end of 16S ribosomal RNA. The protein is Small ribosomal subunit protein uS17 of Sinorhizobium fredii (strain NBRC 101917 / NGR234).